The primary structure comprises 1719 residues: Serine/threonine-protein kinase MRCK alpha (1719 aa).

Residues 77 to 343 (FEILKVIGRG…IEDFKKHPFF (267 aa)) enclose the Protein kinase domain. Residues 83 to 91 (IGRGAFGEV) and Lys-106 each bind ATP. The active-site Proton acceptor is the Asp-201. 2 positions are modified to phosphoserine; by autocatalysis: Ser-222 and Ser-234. Thr-240 is modified (phosphothreonine; by autocatalysis). The AGC-kinase C-terminal domain maps to 344-414 (SGIDWDNIRN…TSSCVLSDRS (71 aa)). Coiled coils occupy residues 437–670 (NNLA…KQKQ), 713–820 (SEIK…WEAQ), and 880–943 (LELQ…SEKG). The segment at 999-1049 (THQFFVKSFTAPTKCHQCTSLMVGLIRQGCSCEVCGFSCHITCVNKAPTVC) adopts a Phorbol-ester/DAG-type zinc-finger fold. Positions 1069-1188 (GTAYEGHVRI…WVGVLSELHK (120 aa)) constitute a PH domain. Residues 1214 to 1486 (IKTTQAAAII…RPLNTEGSLN (273 aa)) form the CNH domain. Ser-1532 is subject to Phosphoserine. Positions 1558–1571 (ISNPTNFNHIAHMG) constitute a CRIB domain. The tract at residues 1579 to 1719 (LKDLPMNPRP…ESTDRGSWDP (141 aa)) is disordered. Over residues 1591–1606 (SRTVFSGSVSIPSITK) the composition is skewed to polar residues. Phosphoserine is present on residues Ser-1598, Ser-1600, Ser-1616, Ser-1638, Ser-1651, Ser-1656, Ser-1680, Ser-1706, and Ser-1708. Low complexity predominate over residues 1612-1627 (GRSMSASSGLSARSSA). Residues 1652 to 1661 (PSEGSLSSGG) show a composition bias toward low complexity.

It belongs to the protein kinase superfamily. AGC Ser/Thr protein kinase family. DMPK subfamily. Homodimer and homotetramer via the coiled coil regions. Interacts tightly with GTP-bound but not GDP-bound CDC42. Forms a tripartite complex with MYO18A and LRP35A with the latter acting as an adapter connecting CDC42BPA and MYO18A. LRP35A binding results in activation of CDC42BPA by abolition of its negative autoregulation. Interacts with LURAP1. Interacts (via AGC-kinase C-terminal domain) with FAM89B/LRAP25 (via LRR repeat). Forms a tripartite complex with FAM89B/LRAP25 and LIMK1. Mg(2+) serves as cofactor. Proteolytically cleaved by caspases upon apoptosis induction. The cleavage at Asp-478 by CASP3 increases its kinase activity (in vitro).

The protein localises to the cytoplasm. It is found in the cell projection. Its subcellular location is the lamellipodium. The enzyme catalyses L-seryl-[protein] + ATP = O-phospho-L-seryl-[protein] + ADP + H(+). The catalysed reaction is L-threonyl-[protein] + ATP = O-phospho-L-threonyl-[protein] + ADP + H(+). Its activity is regulated as follows. Maintained in an inactive, closed conformation by an interaction between the kinase domain and the negative autoregulatory C-terminal coiled-coil region. Agonist binding to the phorbol ester binding site disrupts this, releasing the kinase domain to allow N-terminus-mediated dimerization and kinase activation by transautophosphorylation. Inhibited by chelerythrine chloride. In terms of biological role, serine/threonine-protein kinase which is an important downstream effector of CDC42 and plays a role in the regulation of cytoskeleton reorganization and cell migration. Regulates actin cytoskeletal reorganization via phosphorylation of PPP1R12C and MYL9/MLC2. In concert with MYO18A and LRP35A, is involved in modulating lamellar actomyosin retrograde flow that is crucial to cell protrusion and migration. Phosphorylates: PPP1R12A and LIMK2. May play a role in TFRC-mediated iron uptake. In concert with FAM89B/LRAP25 mediates the targeting of LIMK1 to the lamellipodium resulting in its activation and subsequent phosphorylation of CFL1 which is important for lamellipodial F-actin regulation. Triggers the formation of an extrusion apical actin ring required for epithelial extrusion of apoptotic cells. The chain is Serine/threonine-protein kinase MRCK alpha (Cdc42bpa) from Mus musculus (Mouse).